The sequence spans 573 residues: Acyl-coenzyme A synthetase ACSM1, mitochondrial (573 aa).

The N-terminal 35 residues, 1–35, are a transit peptide targeting the mitochondrion; it reads MQWLKSFQICKVLQGFSLSPTQLHRRLFSRVGAPR. Lys81 carries the post-translational modification N6-succinyllysine. The residue at position 142 (Lys142) is an N6-acetyllysine; alternate. Lys142 carries the N6-succinyllysine; alternate modification. Residue Lys179 is modified to N6-succinyllysine. At Lys200 the chain carries N6-acetyllysine; alternate. Lys200 bears the N6-succinyllysine; alternate mark. N6-acetyllysine is present on Lys210. Residue 222–230 coordinates ATP; sequence TSGTTGYPK. Lys233 and Lys324 each carry N6-succinyllysine. Lys352 and Lys387 each carry N6-acetyllysine; alternate. 2 positions are modified to N6-succinyllysine; alternate: Lys352 and Lys387. Asp448 and Arg463 together coordinate ATP. Lys501 carries the post-translational modification N6-succinyllysine. Lys527 is modified (N6-acetyllysine). Residue Lys534 is modified to N6-acetyllysine; alternate. N6-succinyllysine; alternate is present on Lys534. Position 545 is an N6-acetyllysine (Lys545). Lys559 contacts ATP.

Belongs to the ATP-dependent AMP-binding enzyme family. Monomer. Requires Mg(2+) as cofactor. The cofactor is Mn(2+). As to expression, highly expressed in liver and kidney.

The protein resides in the mitochondrion matrix. It is found in the mitochondrion. The enzyme catalyses a medium-chain fatty acid + ATP + CoA = a medium-chain fatty acyl-CoA + AMP + diphosphate. The catalysed reaction is benzoate + ATP + CoA = benzoyl-CoA + AMP + diphosphate. It catalyses the reaction (R)-lipoate + GTP + H(+) = (R)-lipoyl-GMP + diphosphate. It carries out the reaction octanoate + ATP + CoA = octanoyl-CoA + AMP + diphosphate. The enzyme catalyses decanoate + ATP + CoA = decanoyl-CoA + AMP + diphosphate. The catalysed reaction is dodecanoate + ATP + CoA = dodecanoyl-CoA + AMP + diphosphate. It catalyses the reaction tetradecanoate + ATP + CoA = tetradecanoyl-CoA + AMP + diphosphate. It carries out the reaction hexanoate + ATP + CoA = hexanoyl-CoA + AMP + diphosphate. The enzyme catalyses butanoate + ATP + CoA = butanoyl-CoA + AMP + diphosphate. The catalysed reaction is hexadecanoate + ATP + CoA = hexadecanoyl-CoA + AMP + diphosphate. Its function is as follows. Catalyzes the activation of fatty acids by CoA to produce an acyl-CoA, the first step in fatty acid metabolism. Capable of activating medium-chain fatty acids (e.g. butyric (C4) to decanoic (C10) acids), and certain carboxylate-containing xenobiotics, e.g. benzoate. Also catalyzes the activation of lipoate to lipoyl-nucleoside monophosphate. Activates lipoate with GTP at a 1000-fold higher rate than with ATP and activates both (R)- and (S)-lipoate to the respective lipoyl-GMP, with a preference for (R)-lipoate. In Mus musculus (Mouse), this protein is Acyl-coenzyme A synthetase ACSM1, mitochondrial (Acsm1).